We begin with the raw amino-acid sequence, 497 residues long: Probable cytosol aminopeptidase (497 aa).

K263 and D268 together coordinate Mn(2+). K275 is an active-site residue. 3 residues coordinate Mn(2+): D286, D345, and E347. R349 is an active-site residue.

Belongs to the peptidase M17 family. The cofactor is Mn(2+).

The protein localises to the cytoplasm. It catalyses the reaction Release of an N-terminal amino acid, Xaa-|-Yaa-, in which Xaa is preferably Leu, but may be other amino acids including Pro although not Arg or Lys, and Yaa may be Pro. Amino acid amides and methyl esters are also readily hydrolyzed, but rates on arylamides are exceedingly low.. The catalysed reaction is Release of an N-terminal amino acid, preferentially leucine, but not glutamic or aspartic acids.. In terms of biological role, presumably involved in the processing and regular turnover of intracellular proteins. Catalyzes the removal of unsubstituted N-terminal amino acids from various peptides. The protein is Probable cytosol aminopeptidase of Brucella ovis (strain ATCC 25840 / 63/290 / NCTC 10512).